The primary structure comprises 749 residues: Ribosome-releasing factor 2, mitochondrial (749 aa).

A mitochondrion-targeting transit peptide spans 1–22 (MLLLLCNRSVVPRGIRRILRTA). A tr-type G domain is found at 44–322 (KNIRNIGILA…AVLKYLPAPN (279 aa)). Residues 53 to 60 (AHIDGGKT), 117 to 121 (DTPGH), and 171 to 174 (NKMD) each bind GTP.

It belongs to the TRAFAC class translation factor GTPase superfamily. Classic translation factor GTPase family. EF-G/EF-2 subfamily.

The protein resides in the mitochondrion. Mitochondrial GTPase that mediates the disassembly of ribosomes from messenger RNA at the termination of mitochondrial protein biosynthesis. Not involved in the GTP-dependent ribosomal translocation step during translation elongation. This Culex quinquefasciatus (Southern house mosquito) protein is Ribosome-releasing factor 2, mitochondrial.